Here is a 732-residue protein sequence, read N- to C-terminus: Calcineurin-interacting protein 2 (732 aa).

Disordered regions lie at residues 1–24 (MNRGYDSYNRSRSTSSRPLDREPY), 115–169 (DYEP…ALPK), 181–232 (QKKD…LDDR), 310–351 (ILSR…TSRR), 372–397 (RSQSLRQSRISEHSKRSLGKTTSTVS), and 426–708 (QTVT…PLEE). Residues 8 to 17 (YNRSRSTSSR) are compositionally biased toward polar residues. Residues 117 to 129 (EPLRKEPELKEQK) show a composition bias toward basic and acidic residues. Polar residues-rich tracts occupy residues 151–163 (SGITLSPSDSSRT) and 189–208 (IPRQVSSADSQRTIRNNNEL). The span at 312 to 323 (SRSVSTSPSSVT) shows a compositional bias: low complexity. Polar residues predominate over residues 324 to 351 (DNIPKTSTSRIPSSENPKTMEHTTTSRR). Residues 426–439 (QTVTNVRVPSSRGS) show a composition bias toward polar residues. Basic and acidic residues-rich tracts occupy residues 526-538 (QSPEELDYGRFAD) and 546-557 (PGDHQAREEDLP). Residues 607 to 619 (SVTPSEKSLPRNS) are compositionally biased toward polar residues. Positions 688–705 (NSPNKSSSSSKARPSAAP) are enriched in low complexity.

In terms of assembly, interacts with tax-6. In terms of tissue distribution, expressed in intestine.

This chain is Calcineurin-interacting protein 2, found in Caenorhabditis elegans.